Consider the following 304-residue polypeptide: ADP-polyphosphate phosphotransferase (304 aa).

The protein belongs to the polyphosphate kinase 2 (PPK2) family. Class I subfamily.

It carries out the reaction [phosphate](n) + ATP = [phosphate](n+1) + ADP. Uses inorganic polyphosphate (polyP) as a donor to convert ADP to ATP. The sequence is that of ADP-polyphosphate phosphotransferase from Pseudomonas aeruginosa (strain ATCC 15692 / DSM 22644 / CIP 104116 / JCM 14847 / LMG 12228 / 1C / PRS 101 / PAO1).